The following is a 388-amino-acid chain: Processive diacylglycerol beta-glucosyltransferase (388 aa).

Belongs to the glycosyltransferase 28 family. UgtP subfamily.

It is found in the cell membrane. The enzyme catalyses a 1,2-diacyl-3-O-(beta-D-glucopyranosyl)-sn-glycerol + UDP-alpha-D-glucose = a 1,2-diacyl-3-O-(beta-D-Glc-(1-&gt;6)-beta-D-Glc)-sn-glycerol + UDP + H(+). It catalyses the reaction a 1,2-diacyl-3-O-(beta-D-Glc-(1-&gt;6)-beta-D-Glc)-sn-glycerol + UDP-alpha-D-glucose = a 1,2-diacyl-3-O-(beta-D-Glc-(1-&gt;6)-beta-D-Glc-(1-&gt;6)-beta-D-Glc)-sn-glycerol + UDP + H(+). The catalysed reaction is a 1,2-diacyl-sn-glycerol + UDP-alpha-D-glucose = a 1,2-diacyl-3-O-(beta-D-glucopyranosyl)-sn-glycerol + UDP + H(+). It functions in the pathway glycolipid metabolism; diglucosyl-diacylglycerol biosynthesis. Its function is as follows. Processive glucosyltransferase involved in the biosynthesis of both the bilayer- and non-bilayer-forming membrane glucolipids. Is able to successively transfer up to three glucosyl residues to diacylglycerol (DAG), thereby catalyzing the formation of beta-monoglucosyl-DAG (3-O-(beta-D-glucopyranosyl)-1,2-diacyl-sn-glycerol), beta-diglucosyl-DAG (3-O-(beta-D-glucopyranosyl-beta-(1-&gt;6)-D-glucopyranosyl)-1,2-diacyl-sn-glycerol) and beta-triglucosyl-DAG (3-O-(beta-D-glucopyranosyl-beta-(1-&gt;6)-D-glucopyranosyl-beta-(1-&gt;6)-D-glucopyranosyl)-1,2-diacyl-sn-glycerol). Beta-diglucosyl-DAG is the predominant glycolipid found in Bacillales and is also used as a membrane anchor for lipoteichoic acid (LTA). This is Processive diacylglycerol beta-glucosyltransferase from Bacillus cytotoxicus (strain DSM 22905 / CIP 110041 / 391-98 / NVH 391-98).